The chain runs to 292 residues: tRNA dimethylallyltransferase (292 aa).

10-17 (GPTASGKS) serves as a coordination point for ATP. 12-17 (TASGKS) is a binding site for substrate. Interaction with substrate tRNA regions lie at residues 35 to 38 (DSMQ) and 159 to 163 (QRIVR).

Belongs to the IPP transferase family. In terms of assembly, monomer. The cofactor is Mg(2+).

It catalyses the reaction adenosine(37) in tRNA + dimethylallyl diphosphate = N(6)-dimethylallyladenosine(37) in tRNA + diphosphate. Catalyzes the transfer of a dimethylallyl group onto the adenine at position 37 in tRNAs that read codons beginning with uridine, leading to the formation of N6-(dimethylallyl)adenosine (i(6)A). The chain is tRNA dimethylallyltransferase from Chelativorans sp. (strain BNC1).